The primary structure comprises 159 residues: Endoribonuclease YbeY (159 aa).

3 residues coordinate Zn(2+): His-125, His-129, and His-135.

Belongs to the endoribonuclease YbeY family. Zn(2+) is required as a cofactor.

Its subcellular location is the cytoplasm. Functionally, single strand-specific metallo-endoribonuclease involved in late-stage 70S ribosome quality control and in maturation of the 3' terminus of the 16S rRNA. This is Endoribonuclease YbeY from Thermoanaerobacter pseudethanolicus (strain ATCC 33223 / 39E) (Clostridium thermohydrosulfuricum).